The following is a 456-amino-acid chain: MEKLWGGRFQGKSEAWIDDFGASISFDQKMAKEDLAGSLAHVAMLAKCGIISDSEASEITAGLKILQEKLALGELEFSTVNEDIHLNIEKLLHEEIGPVAGKLHTARSRNDQVATDMHLYLKEAVAEIIQSLKHLRAVLVQKAEANVETIMPGYTHLQHAQPISFAHHLLAYFGMFTRDLERLEESVKRIDISPLGSAALAGTTFPIDRAYSAELLGFSAVYENSLDGVSDRDFIIEFLSNSSILMMHLSRFCEELILWTSHEFQFVELTDAFSTGSSIMPQKKNPDMAELIRGKTGRVYGNLFGMLTVLKGLPLAYNKDLQEDKEGMFDTLETVHTSLDIFAGMIETMKVNADIMEESTQKDFSNATELADYLAKKGVPFREAHEIVGKLVLECTQNGIYLQDVAFSHYQEIHPLIEEDIYTVLASKTAVQKRNSYGGTGFDQIHVALANAKKTL.

The protein belongs to the lyase 1 family. Argininosuccinate lyase subfamily.

The protein localises to the cytoplasm. The catalysed reaction is 2-(N(omega)-L-arginino)succinate = fumarate + L-arginine. The protein operates within amino-acid biosynthesis; L-arginine biosynthesis; L-arginine from L-ornithine and carbamoyl phosphate: step 3/3. The sequence is that of Argininosuccinate lyase from Listeria innocua serovar 6a (strain ATCC BAA-680 / CLIP 11262).